The following is a 340-amino-acid chain: Pilin (340 aa).

The signal sequence occupies residues 1-23; the sequence is MKLRHLLLTGAALTSFAATTVHG. 2 consecutive cross-links (isoaspartyl lysine isopeptide (Lys-Asn)) follow at residues 36–168 and 179–303; these read KNLD…QFKN and KKVS…TFTN. Lys-161 is covalently cross-linked (Threonyl lysine isopeptide (Lys-Thr) (interchain with T-311)). The EVPTG sorting signal motif lies at 308 to 312; sequence EVPTG. Residue Thr-311 is modified to Pentaglycyl murein peptidoglycan amidated threonine; alternate. Thr-311 is covalently cross-linked (Threonyl lysine isopeptide (Thr-Lys) (interchain with K-161); alternate). Positions 312–340 are cleaved as a propeptide — removed by sortase C1; sequence GVAMTVAPYIALGIVAVGGALYFVKKKNA.

This sequence belongs to the Streptococcus pilin family. In terms of assembly, forms columns of about 3-nanometers in diameter of head-to-tail-assembled molecules. Post-translationally, proteolytically processed and assembled in pili through a transpeptidation reaction catalyzed by the sortase C1. The last pilin subunit is cross-linked to the peptidoglycan.

The protein resides in the secreted. Its subcellular location is the cell wall. The protein localises to the fimbrium. Its function is as follows. Major component of the pilus. A stack of the pilin subunits, joined by intermolecular isopeptide bonds, forms the pilus. The pilus is required for bacterial adhesion to host cells, for bacterial aggregation, and for biofilm formation. The chain is Pilin from Streptococcus pyogenes serotype M1.